We begin with the raw amino-acid sequence, 371 residues long: Pyruvate dehydrogenase E1 component subunit alpha (371 aa).

As to quaternary structure, heterodimer of an alpha and a beta chain. Thiamine diphosphate is required as a cofactor.

The enzyme catalyses N(6)-[(R)-lipoyl]-L-lysyl-[protein] + pyruvate + H(+) = N(6)-[(R)-S(8)-acetyldihydrolipoyl]-L-lysyl-[protein] + CO2. The pyruvate dehydrogenase complex catalyzes the overall conversion of pyruvate to acetyl-CoA and CO(2). It contains multiple copies of three enzymatic components: pyruvate dehydrogenase (E1), dihydrolipoamide acetyltransferase (E2) and lipoamide dehydrogenase (E3). In Bacillus cereus, this protein is Pyruvate dehydrogenase E1 component subunit alpha.